Reading from the N-terminus, the 266-residue chain is Vesicle-associated protein 4-1 (266 aa).

The interval 28 to 57 (STTSSSSTQNPNQNYRSRHGNRNTDISAVS) is disordered. The 124-residue stretch at 76 to 199 (RLRLDPSSYL…VEQVLRVIFI (124 aa)) folds into the MSP domain. Residues 200 to 228 (DADRPSAALEKLKRQLDEAEAAVEARKKP) adopt a coiled-coil conformation. Over residues 219–229 (EAAVEARKKPP) the composition is skewed to basic and acidic residues. The tract at residues 219-239 (EAAVEARKKPPPETGPRVVGE) is disordered. S264 bears the Phosphoserine mark.

The protein belongs to the VAMP-associated protein (VAP) (TC 9.B.17) family.

May play a role in vesicle trafficking. The polypeptide is Vesicle-associated protein 4-1 (PVA41) (Arabidopsis thaliana (Mouse-ear cress)).